The primary structure comprises 361 residues: uncharacterized protein (361 aa).

An N-terminal signal peptide occupies residues 1 to 28 (MSKSKFTKIIVVICIAAMFITGTSILSF).

This is an uncharacterized protein from Ruminiclostridium cellulolyticum (strain ATCC 35319 / DSM 5812 / JCM 6584 / H10) (Clostridium cellulolyticum).